A 276-amino-acid polypeptide reads, in one-letter code: Large ribosomal subunit protein uL2 (276 aa).

Positions 28–38 are enriched in basic and acidic residues; that stretch reads RPEKSLTEKLS. Disordered regions lie at residues 28–57 and 219–276; these read RPEKSLTEKLSKKGGRNNQGRLTVRHQGGG and TVRG…RRKK.

The protein belongs to the universal ribosomal protein uL2 family. Part of the 50S ribosomal subunit. Forms a bridge to the 30S subunit in the 70S ribosome.

Its function is as follows. One of the primary rRNA binding proteins. Required for association of the 30S and 50S subunits to form the 70S ribosome, for tRNA binding and peptide bond formation. It has been suggested to have peptidyltransferase activity; this is somewhat controversial. Makes several contacts with the 16S rRNA in the 70S ribosome. This chain is Large ribosomal subunit protein uL2, found in Exiguobacterium sp. (strain ATCC BAA-1283 / AT1b).